The sequence spans 425 residues: Serine--tRNA ligase (425 aa).

233-235 contacts L-serine; the sequence is TAE. An ATP-binding site is contributed by 264–266; it reads RAE. Position 287 (Glu-287) interacts with L-serine. 351–354 contacts ATP; it reads EISS. Ser-387 serves as a coordination point for L-serine.

This sequence belongs to the class-II aminoacyl-tRNA synthetase family. Type-1 seryl-tRNA synthetase subfamily. Homodimer. The tRNA molecule binds across the dimer.

It localises to the cytoplasm. The enzyme catalyses tRNA(Ser) + L-serine + ATP = L-seryl-tRNA(Ser) + AMP + diphosphate + H(+). The catalysed reaction is tRNA(Sec) + L-serine + ATP = L-seryl-tRNA(Sec) + AMP + diphosphate + H(+). The protein operates within aminoacyl-tRNA biosynthesis; selenocysteinyl-tRNA(Sec) biosynthesis; L-seryl-tRNA(Sec) from L-serine and tRNA(Sec): step 1/1. In terms of biological role, catalyzes the attachment of serine to tRNA(Ser). Is also able to aminoacylate tRNA(Sec) with serine, to form the misacylated tRNA L-seryl-tRNA(Sec), which will be further converted into selenocysteinyl-tRNA(Sec). This Clostridium botulinum (strain Eklund 17B / Type B) protein is Serine--tRNA ligase.